The chain runs to 101 residues: Small ribosomal subunit protein uS14 (101 aa).

Belongs to the universal ribosomal protein uS14 family. As to quaternary structure, part of the 30S ribosomal subunit. Contacts proteins S3 and S10.

Functionally, binds 16S rRNA, required for the assembly of 30S particles and may also be responsible for determining the conformation of the 16S rRNA at the A site. The chain is Small ribosomal subunit protein uS14 from Methylorubrum populi (strain ATCC BAA-705 / NCIMB 13946 / BJ001) (Methylobacterium populi).